The sequence spans 189 residues: Elongation factor P (189 aa).

This sequence belongs to the elongation factor P family.

The protein localises to the cytoplasm. Its pathway is protein biosynthesis; polypeptide chain elongation. Functionally, involved in peptide bond synthesis. Stimulates efficient translation and peptide-bond synthesis on native or reconstituted 70S ribosomes in vitro. Probably functions indirectly by altering the affinity of the ribosome for aminoacyl-tRNA, thus increasing their reactivity as acceptors for peptidyl transferase. The polypeptide is Elongation factor P (Ehrlichia chaffeensis (strain ATCC CRL-10679 / Arkansas)).